The sequence spans 387 residues: MNFHEYQAKQLFAEYGIPVPAGRIASSADEAVTAAKSLGNGPWMVKAQIHAGGRGKAGGVKFCKTTDEVKQAAATMLGTKMATYQSAGVALPVNLVLVTEAGEITKELYLSVLVDRGTRSITYIASSEGGVDIEHVAAETPEKIQTLNVDFVEGLQPYQGRDIGFHLGLEAKQVNQLSKIMISLYQLFNDKDLSLIELNPLAILSNGDLYALDGKINSDDNATFRHKELAAMRDKTQEDETEVLASENDLNYVTMDGNIGCMVNGAGLAMATMDVIKLNGGEPANFLDVGGGATKERVTTAFKLILSSNKVKAIFVNIFGGIVRCDMIAEGIIAAVKEVGVKVPVIVRLEGTNVDAGKQLLATSGLAIIPADDINDGAKKAVAAVTV.

Residues 9 to 244 (KQLFAEYGIP…KTQEDETEVL (236 aa)) form the ATP-grasp domain. ATP-binding positions include Lys46, 53–55 (GRG), Gly102, and Glu107. The Mg(2+) site is built by Asn199 and Asp213. Residues Asn264 and 321–323 (GIV) each bind substrate.

Belongs to the succinate/malate CoA ligase beta subunit family. As to quaternary structure, heterotetramer of two alpha and two beta subunits. Mg(2+) serves as cofactor.

It catalyses the reaction succinate + ATP + CoA = succinyl-CoA + ADP + phosphate. It carries out the reaction GTP + succinate + CoA = succinyl-CoA + GDP + phosphate. It participates in carbohydrate metabolism; tricarboxylic acid cycle; succinate from succinyl-CoA (ligase route): step 1/1. Its function is as follows. Succinyl-CoA synthetase functions in the citric acid cycle (TCA), coupling the hydrolysis of succinyl-CoA to the synthesis of either ATP or GTP and thus represents the only step of substrate-level phosphorylation in the TCA. The beta subunit provides nucleotide specificity of the enzyme and binds the substrate succinate, while the binding sites for coenzyme A and phosphate are found in the alpha subunit. The protein is Succinate--CoA ligase [ADP-forming] subunit beta of Xylella fastidiosa (strain M23).